Here is a 256-residue protein sequence, read N- to C-terminus: DNA repair protein RecO (256 aa).

It belongs to the RecO family.

In terms of biological role, involved in DNA repair and RecF pathway recombination. This chain is DNA repair protein RecO, found in Desulforamulus reducens (strain ATCC BAA-1160 / DSM 100696 / MI-1) (Desulfotomaculum reducens).